Consider the following 125-residue polypeptide: Large ribosomal subunit protein bL12 (125 aa).

The protein belongs to the bacterial ribosomal protein bL12 family. As to quaternary structure, homodimer. Part of the ribosomal stalk of the 50S ribosomal subunit. Forms a multimeric L10(L12)X complex, where L10 forms an elongated spine to which 2 to 4 L12 dimers bind in a sequential fashion. Binds GTP-bound translation factors.

Its function is as follows. Forms part of the ribosomal stalk which helps the ribosome interact with GTP-bound translation factors. Is thus essential for accurate translation. This is Large ribosomal subunit protein bL12 from Sinorhizobium medicae (strain WSM419) (Ensifer medicae).